Consider the following 510-residue polypeptide: Probable cytosol aminopeptidase (510 aa).

The Mn(2+) site is built by Lys268 and Asp273. Lys280 is an active-site residue. The Mn(2+) site is built by Asp291, Asp350, and Glu352. Arg354 is a catalytic residue.

It belongs to the peptidase M17 family. It depends on Mn(2+) as a cofactor.

It is found in the cytoplasm. It carries out the reaction Release of an N-terminal amino acid, Xaa-|-Yaa-, in which Xaa is preferably Leu, but may be other amino acids including Pro although not Arg or Lys, and Yaa may be Pro. Amino acid amides and methyl esters are also readily hydrolyzed, but rates on arylamides are exceedingly low.. It catalyses the reaction Release of an N-terminal amino acid, preferentially leucine, but not glutamic or aspartic acids.. Functionally, presumably involved in the processing and regular turnover of intracellular proteins. Catalyzes the removal of unsubstituted N-terminal amino acids from various peptides. The protein is Probable cytosol aminopeptidase of Micrococcus luteus (strain ATCC 4698 / DSM 20030 / JCM 1464 / CCM 169 / CCUG 5858 / IAM 1056 / NBRC 3333 / NCIMB 9278 / NCTC 2665 / VKM Ac-2230) (Micrococcus lysodeikticus).